The chain runs to 470 residues: ESX-4 secretion system ATPase EccB4 (470 aa).

The helical transmembrane segment at 44-64 threads the bilayer; the sequence is LALGCVLAIVAAMGCAFVALL.

It belongs to the EccB family. As to quaternary structure, part of the ESX-4 / type VII secretion system (T7SS), which is composed of cytosolic and membrane components.

Its subcellular location is the cell membrane. Functionally, an ATPase. The chain is ESX-4 secretion system ATPase EccB4 (eccB4) from Mycobacterium tuberculosis (strain CDC 1551 / Oshkosh).